The sequence spans 526 residues: MNVDTTSPQAPLAGVESKQDGASNEATAKAESTTHDQNESSSFDERPVHSALSERQRSALLAVASFAAAISPASTTTYYPAITTLANDLDVSITQINLSLPAYQIFQGLAPTVAAAFSDRFGRRPVYLVSLSINMAANLGLALQKNYASLMVLRCLQSSSSGGTVALGQAVMDDLITSEERGRYMAYLTLGLVMGPALGPLIGGLLSQYLGWRAIFWFLMILGGFFFLMVLTFFRETNRSIVGDGSVPPQKWNRSLVQIFRKDKLIANPESLAKKRISVNPLASIQILRNKENFIVCMYGALLFGGYASVISIFATQLEERYGYSQVQVGLCYLPFGVGSILSRWTAGKMIDWNFKREADKQGFKIVKNRQQDLSRYDIEKARLTVSFPMIFATCGFVVAYGWLMQYDTHVASVLVVVFLIANVFTGVLIANSALLNDLNPGNGAALGAAMNLTRCLMGAGGVAAVTPLINKIGIGYTATATAGVWVVTLPALYLVYSKGYTWRKAALEASSQDRRENPDVASGSP.

The interval 1–49 (MNVDTTSPQAPLAGVESKQDGASNEATAKAESTTHDQNESSSFDERPVH) is disordered. Over residues 32–49 (STTHDQNESSSFDERPVH) the composition is skewed to basic and acidic residues. An N-linked (GlcNAc...) asparagine glycan is attached at Asn-38. Residues 59-79 (ALLAVASFAAAISPASTTTYY) form a helical membrane-spanning segment. Asn-97 carries N-linked (GlcNAc...) asparagine glycosylation. Transmembrane regions (helical) follow at residues 126 to 143 (VYLV…GLAL), 186 to 206 (AYLT…GGLL), and 214 to 234 (AIFW…LTFF). N-linked (GlcNAc...) asparagine glycosylation is found at Asn-238 and Asn-253. 6 helical membrane-spanning segments follow: residues 294 to 314 (FIVC…ISIF), 322 to 342 (YGYS…GSIL), 384 to 404 (LTVS…YGWL), 411 to 431 (VASV…VLIA), 446 to 466 (ALGA…VAAV), and 473 to 493 (IGIG…LPAL).

It belongs to the major facilitator superfamily.

It localises to the membrane. In terms of biological role, MFS-type transporter; part of the gene cluster that mediates the biosynthesis of squalestatin S1 (SQS1, also known as zaragozic acid A), a heavily oxidized fungal polyketide that offers potent cholesterol lowering activity by targeting squalene synthase (SS). The protein is MFS-type transporter clz19 of Cochliobolus lunatus (Filamentous fungus).